The primary structure comprises 325 residues: Syntaxin-16 (325 aa).

Residues 1 to 301 (MATRRLTDAF…AEQYQKKNRK (301 aa)) lie on the Cytoplasmic side of the membrane. Position 41 is a phosphoserine (serine 41). The t-SNARE coiled-coil homology domain maps to 230-292 (TLMVEERERE…EDGLKQLHKA (63 aa)). The chain crosses the membrane as a helical; Anchor for type IV membrane protein span at residues 302-322 (MLVILILFVIIIVLIVVLVGV). Over 323 to 325 (KSR) the chain is Vesicular.

This sequence belongs to the syntaxin family. In terms of assembly, interacts with GCC2. Interacts with BAIAP3; this interaction is increased in the presence of calcium. Ubiquitous.

It localises to the golgi apparatus membrane. The protein localises to the cytoplasm. In terms of biological role, SNARE involved in vesicular transport from the late endosomes to the trans-Golgi network. This Homo sapiens (Human) protein is Syntaxin-16 (STX16).